Reading from the N-terminus, the 1368-residue chain is Alpha-latrotoxin-Lg1a (1368 aa).

The interval 217–236 (VLYAILYGTQTYVSVMFFLL) is helix H8 is the probable transmembrane region of the tetrameric pore inserted in the target cell membrane. Cys392 and Cys1044 form a disulfide bridge. ANK repeat units follow at residues 469–500 (QGRTVFHAAAKSGNDKIMIELTFFSKYTDINQ), 504–533 (KGYTPIHVAADSGNAGIVNLLIRSGISVNS), 538–568 (FLQTPLHLAAQRGFVATFQRLMESPEININE), 572–601 (DGFTPLHYAVRGGERILEAFINQAGIDVNV), 605–635 (KGLTPFHLAVIKNDWPVASTLLRSKKIDINA), 639–669 (NNMTALHYAAILGFLETTKQLINLKEINANA), 674–704 (GLLSALHYAILYKHDDVALFLLKSSKVNYNL), 708–737 (GDITPLHLAVMQGRKQVLSEMFNIGININQ), 741–770 (EKYTPLHLAAMSKYPELVEILLDQGSNLEA), 774–803 (TGATPLNLATFKGKSQAALILLKDEVNWRE), 807–837 (NGQMPIHGAAMNGLLDVAQAILYLDATVLDI), 841–870 (NLDTPLNLAAQNSHIDMVKYFIDLGAKVNT), 874–903 (KGQAPLLAFSKKGNLDMVKYLFDKNANVYI), 907–936 (DGLNFFYYAVRNGHLNIVKYAMSEKDKFEW), 953–981 (ISHFAVCDAVQYDKIEIVKYFVGTLGHYS), 982–1011 (ICSPLHQAARYGHIHIVKYLVEEEVLSVDG), 1013–1042 (KPDTPLCYASENGHLAVVQYLIRNGAKVNH), 1046–1075 (NGMTAIDKAITKNQLQVVQILAENGVDFRR), 1079–1109 (LDATPFLTAVASNSYEIAEYLIREKRQNINI), and 1115–1144 (NKETALHLAVYYKNLQMIKLLVKYGIDENI). Positions 1174–1177 (KFRR) are furin-like endopeptidase recognition region. Positions 1178-1368 (EYKSSNGEHD…GETLHLFHES (191 aa)) are excised as a propeptide.

The protein belongs to the cationic peptide 01 (latrotoxin) family. 03 (alpha-latrotoxin) subfamily. Homotetramer in membranes. As to expression, expressed in venom gland, cephalothorax, and abdomen tissues from both males and females.

The protein resides in the secreted. The protein localises to the target cell membrane. In terms of biological role, presynaptic neurotoxin that causes massive release of neurotransmitters from vertebrate (but not invertebrate) nerve terminals and endocrine cells via a complex mechanism involving activation of receptor(s) and toxin insertion into the plasma membrane with subsequent pore formation. Binds to neurexin-1-alpha (NRXN1) in a calcium dependent manner, adhesion G protein-coupled receptor L1 (ADGRL1, also termed latrophilin-1 and calcium-independent receptor of latrotoxin (CIRL)), and receptor-type tyrosine-protein phosphatase S (PTPRS), also termed PTP sigma. NRXN1 and PTPRS are suggested to provide a platform for binding and subsequent pore formation events. In contrast, binding to ADGRL1 does not involve oligomerization and channel formation, but direct downstream stimulation of the synaptic fusion machinery. This is Alpha-latrotoxin-Lg1a from Latrodectus geometricus (Brown widow spider).